Reading from the N-terminus, the 105-residue chain is N(4)-acetylcytidine amidohydrolase (105 aa).

The ASCH domain occupies 7 to 93 (TFFERFEHDI…VIAEIYPGLE (87 aa)). Lysine 21 functions as the Proton acceptor in the catalytic mechanism. Threonine 24 functions as the Nucleophile in the catalytic mechanism. Glutamate 74 serves as the catalytic Proton donor.

This sequence belongs to the N(4)-acetylcytidine amidohydrolase family.

The enzyme catalyses N(4)-acetylcytidine + H2O = cytidine + acetate + H(+). It catalyses the reaction N(4)-acetyl-2'-deoxycytidine + H2O = 2'-deoxycytidine + acetate + H(+). The catalysed reaction is N(4)-acetylcytosine + H2O = cytosine + acetate + H(+). Catalyzes the hydrolysis of N(4)-acetylcytidine (ac4C). The chain is N(4)-acetylcytidine amidohydrolase from Shewanella baltica (strain OS195).